The primary structure comprises 453 residues: MGTHDMSPNASHSYIYRVLSDILEFPDNEQRMWWHSVAPMFAEMLRACGYDIHEQYKILGIWKKAVIPFLGCYPTNDGPRWLSILTRYGTPFELSLNCSHRLVRYTFEPINAATGTDKDPFNTQAIWESLSQLRRLNGDVDTELFNHFKANLTVDNAESAHLVESNLAGSKIRTQNKLALDLQNGSFVVKAYFYPTLKSAATGRSITDLMLSSVRQQVQKWSPTLAQPLSVLEEYIEARGPDSTASPRLLSCDLINPERARTKIYLLERQVSIEAMEDLWTLGGRRKSDSALAALDIIREIWSLIQLPPCLASYPSGYLPLGTVPDEQLPLMVNYTLRPDDPMPEPQVYFTTFGQNDLHVTNALTAFFERQGWTELAESYKENLRAYYPHADQETANYIHAYVSFSYRKGVSYMSVYLQTLETGDWPITYSPKRQYLCNEHPIHLKELAKACA.

L-tryptophan contacts are provided by residues 84–85 and Glu93; that span reads IL. Substrate contacts are provided by Arg104, Lys190, and Tyr192. 2 residues coordinate L-tryptophan: Tyr194 and Arg248. Residues Arg261, Lys263, Tyr265, Gln347, and Tyr349 each contribute to the substrate site.

Belongs to the tryptophan dimethylallyltransferase family. Homodimer.

The enzyme catalyses L-tryptophan + dimethylallyl diphosphate = 4-(3-methylbut-2-enyl)-L-tryptophan + diphosphate. It functions in the pathway alkaloid biosynthesis. Tryptophan dimethylallyltransferase; part of the gene cluster that mediates the biosynthesis of communesins, a prominent class of indole alkaloids with great potential as pharmaceuticals. Communesins are biosynthesized by the coupling of tryptamine and aurantioclavine, two building blocks derived from L-tryptophan. The L-tryptophan decarboxylase cnsB converts L-tryptophan to tryptamine, whereas the tryptophan dimethylallyltransferase cnsF converts L-tryptophan to 4-dimethylallyl tryptophan which is further transformed to aurantioclavine by the aurantioclavine synthase cnsA, probably aided by the catalase cnsD. The cytochrome P450 monooxygenase cnsC catalyzes the heterodimeric coupling between the two different indole moieties, tryptamine and aurantioclavine, to construct vicinal quaternary stereocenters and yield the heptacyclic communesin scaffold. The O-methyltransferase cnsE then methylates the communesin scaffold to produce communesin K, the simplest characterized communesin that contains the heptacyclic core. The dioxygenase cnsJ converts communesin K into communesin I. Acylation to introduce the hexadienyl group at position N16 of communesin I by the acyltransferase cnsK leads to the production of communesin B. The hexadienyl group is produced by the highly reducing polyketide synthase cnsI, before being hydrolytically removed from cnsI by the serine hydrolase cnsH, converted into hexadienyl-CoA by the CoA ligase cnsG, and then transferred to communesin I by cnsK. Surprisingly, cnsK may also be a promiscuous acyltransferase that can tolerate a range of acyl groups, including acetyl-, propionyl-, and butyryl-CoA, which lead to communesins A, G and H respectively. The roles of the alpha-ketoglutarate-dependent dioxygenases cnsM and cnsP have still to be determined. The sequence is that of Tryptophan dimethylallyltransferase cnsF from Penicillium expansum (Blue mold rot fungus).